The chain runs to 212 residues: High frequency lysogenization protein HflD homolog (212 aa).

A coiled-coil region spans residues 92-128; that stretch reads LIALERKLNAKSAALDELGKRIGQLERQLEHFELLSE.

Belongs to the HflD family.

It localises to the cytoplasm. The protein localises to the cell inner membrane. The sequence is that of High frequency lysogenization protein HflD homolog from Pectobacterium atrosepticum (strain SCRI 1043 / ATCC BAA-672) (Erwinia carotovora subsp. atroseptica).